We begin with the raw amino-acid sequence, 130 residues long: MPTKSFHRTDRVSAQVRRDLGTIVHAAVRDHGLPSVSVSDVEISRDLAHAKVFVTALQQERSAEAVKGLKEIAGQLRTQLARAMKLRHVPELHFHYDDSVDRGERIDNLLRDLDDVGPEATSSDEDAEQR.

The segment at 111-130 (RDLDDVGPEATSSDEDAEQR) is disordered.

This sequence belongs to the RbfA family. As to quaternary structure, monomer. Binds 30S ribosomal subunits, but not 50S ribosomal subunits or 70S ribosomes.

It is found in the cytoplasm. Its function is as follows. One of several proteins that assist in the late maturation steps of the functional core of the 30S ribosomal subunit. Associates with free 30S ribosomal subunits (but not with 30S subunits that are part of 70S ribosomes or polysomes). Required for efficient processing of 16S rRNA. May interact with the 5'-terminal helix region of 16S rRNA. The protein is Ribosome-binding factor A of Xanthomonas euvesicatoria pv. vesicatoria (strain 85-10) (Xanthomonas campestris pv. vesicatoria).